Here is a 557-residue protein sequence, read N- to C-terminus: Dihydroxy-acid dehydratase (557 aa).

Cys47 serves as a coordination point for [2Fe-2S] cluster. Asp79 provides a ligand contact to Mg(2+). Cys120 contacts [2Fe-2S] cluster. 2 residues coordinate Mg(2+): Asp121 and Lys122. An N6-carboxylysine modification is found at Lys122. Cys192 contacts [2Fe-2S] cluster. Mg(2+) is bound at residue Glu444. The active-site Proton acceptor is the Ser470.

This sequence belongs to the IlvD/Edd family. In terms of assembly, homodimer. [2Fe-2S] cluster is required as a cofactor. The cofactor is Mg(2+).

The enzyme catalyses (2R)-2,3-dihydroxy-3-methylbutanoate = 3-methyl-2-oxobutanoate + H2O. The catalysed reaction is (2R,3R)-2,3-dihydroxy-3-methylpentanoate = (S)-3-methyl-2-oxopentanoate + H2O. It functions in the pathway amino-acid biosynthesis; L-isoleucine biosynthesis; L-isoleucine from 2-oxobutanoate: step 3/4. It participates in amino-acid biosynthesis; L-valine biosynthesis; L-valine from pyruvate: step 3/4. In terms of biological role, functions in the biosynthesis of branched-chain amino acids. Catalyzes the dehydration of (2R,3R)-2,3-dihydroxy-3-methylpentanoate (2,3-dihydroxy-3-methylvalerate) into 2-oxo-3-methylpentanoate (2-oxo-3-methylvalerate) and of (2R)-2,3-dihydroxy-3-methylbutanoate (2,3-dihydroxyisovalerate) into 2-oxo-3-methylbutanoate (2-oxoisovalerate), the penultimate precursor to L-isoleucine and L-valine, respectively. The chain is Dihydroxy-acid dehydratase from Synechococcus sp. (strain CC9902).